A 318-amino-acid polypeptide reads, in one-letter code: tRNA-dihydrouridine(16) synthase (318 aa).

Residues 7-9 and Gln68 each bind FMN; that span reads PME. Cys98 acts as the Proton donor in catalysis. Residues Lys139, 200-202, and 224-225 each bind FMN; these read NGE and CR.

This sequence belongs to the Dus family. DusC subfamily. FMN is required as a cofactor.

The enzyme catalyses 5,6-dihydrouridine(16) in tRNA + NADP(+) = uridine(16) in tRNA + NADPH + H(+). The catalysed reaction is 5,6-dihydrouridine(16) in tRNA + NAD(+) = uridine(16) in tRNA + NADH + H(+). Catalyzes the synthesis of 5,6-dihydrouridine (D), a modified base found in the D-loop of most tRNAs, via the reduction of the C5-C6 double bond in target uridines. Specifically modifies U16 in tRNAs. The polypeptide is tRNA-dihydrouridine(16) synthase (Vibrio vulnificus (strain CMCP6)).